Reading from the N-terminus, the 293-residue chain is uncharacterized protein (293 aa).

This is an uncharacterized protein from Bos taurus (Bovine).